Consider the following 610-residue polypeptide: Probable indole-3-acetic acid-amido synthetase GH3.1 (610 aa).

It belongs to the IAA-amido conjugating enzyme family. In terms of tissue distribution, expressed in flowers.

Functionally, may catalyze the synthesis of indole-3-acetic acid (IAA)-amino acid conjugates, providing a mechanism for the plant to cope with the presence of excess auxin. The polypeptide is Probable indole-3-acetic acid-amido synthetase GH3.1 (GH3.1) (Oryza sativa subsp. japonica (Rice)).